We begin with the raw amino-acid sequence, 239 residues long: Protein GrpE (239 aa).

2 disordered regions span residues 1–50 and 209–239; these read MIEN…INTE and MGHG…SEDV. Polar residues predominate over residues 16 to 30; it reads VLNQDNAPEDNSSAA. Acidic residues predominate over residues 218 to 239; the sequence is EEVEKDTVEEDIDSEENTSEDV.

This sequence belongs to the GrpE family. Homodimer.

It localises to the cytoplasm. Functionally, participates actively in the response to hyperosmotic and heat shock by preventing the aggregation of stress-denatured proteins, in association with DnaK and GrpE. It is the nucleotide exchange factor for DnaK and may function as a thermosensor. Unfolded proteins bind initially to DnaJ; upon interaction with the DnaJ-bound protein, DnaK hydrolyzes its bound ATP, resulting in the formation of a stable complex. GrpE releases ADP from DnaK; ATP binding to DnaK triggers the release of the substrate protein, thus completing the reaction cycle. Several rounds of ATP-dependent interactions between DnaJ, DnaK and GrpE are required for fully efficient folding. The chain is Protein GrpE from Prochlorococcus marinus (strain MIT 9312).